Here is a 100-residue protein sequence, read N- to C-terminus: Small ribosomal subunit protein uS14c (100 aa).

Belongs to the universal ribosomal protein uS14 family. In terms of assembly, part of the 30S ribosomal subunit.

It localises to the plastid. Its subcellular location is the chloroplast. Functionally, binds 16S rRNA, required for the assembly of 30S particles. This Oltmannsiellopsis viridis (Marine flagellate) protein is Small ribosomal subunit protein uS14c.